Reading from the N-terminus, the 106-residue chain is Guanylate cyclase activator 2B (106 aa).

A signal peptide spans 1–21 (MSRSQLWAAVVLLLLLQSAQG). The propeptide occupies 22–91 (VYIKYHGFQV…STFKALRTIA (70 aa)). Cystine bridges form between C62-C75, C95-C103, and C98-C106.

This sequence belongs to the guanylin family. Localized predominantly in intestinal villi and the corticomedullary junction of the kidney.

The protein resides in the secreted. Functionally, endogenous activator of intestinal guanylate cyclase. It stimulates this enzyme through the same receptor binding region as the heat-stable enterotoxins. May be a potent physiological regulator of intestinal fluid and electrolyte transport. May be an autocrine/paracrine regulator of intestinal salt and water transport. The sequence is that of Guanylate cyclase activator 2B (Guca2b) from Mus musculus (Mouse).